The primary structure comprises 223 residues: Uracil-DNA glycosylase (223 aa).

Catalysis depends on aspartate 66, which acts as the Proton acceptor.

It belongs to the uracil-DNA glycosylase (UDG) superfamily. UNG family.

It is found in the cytoplasm. The enzyme catalyses Hydrolyzes single-stranded DNA or mismatched double-stranded DNA and polynucleotides, releasing free uracil.. Excises uracil residues from the DNA which can arise as a result of misincorporation of dUMP residues by DNA polymerase or due to deamination of cytosine. The polypeptide is Uracil-DNA glycosylase (Sulfurimonas denitrificans (strain ATCC 33889 / DSM 1251) (Thiomicrospira denitrificans (strain ATCC 33889 / DSM 1251))).